A 380-amino-acid polypeptide reads, in one-letter code: Protein kinase ORF15 (380 aa).

Residues 93–371 (FIPVKVAGCL…LLIAQLTKFI (279 aa)) form the Protein kinase domain. Lysine 118 contributes to the ATP binding site. Aspartate 217 (proton acceptor) is an active-site residue.

Belongs to the protein kinase superfamily. Ser/Thr protein kinase family.

It catalyses the reaction L-seryl-[protein] + ATP = O-phospho-L-seryl-[protein] + ADP + H(+). It carries out the reaction L-threonyl-[protein] + ATP = O-phospho-L-threonyl-[protein] + ADP + H(+). The chain is Protein kinase ORF15 (ORF15) from Ictalurid herpesvirus 1 (strain Auburn) (IcHV-1).